The sequence spans 295 residues: Iron-sulfur cluster carrier protein (295 aa).

ATP is bound at residue 38–45; sequence GKGGVGKS.

It belongs to the Mrp/NBP35 ATP-binding proteins family. In terms of assembly, homodimer.

Functionally, binds and transfers iron-sulfur (Fe-S) clusters to target apoproteins. Can hydrolyze ATP. This chain is Iron-sulfur cluster carrier protein, found in Pyrococcus abyssi (strain GE5 / Orsay).